The primary structure comprises 119 residues: Large ribosomal subunit protein uL18 (119 aa).

Belongs to the universal ribosomal protein uL18 family. Part of the 50S ribosomal subunit; part of the 5S rRNA/L5/L18/L25 subcomplex. Contacts the 5S and 23S rRNAs.

Its function is as follows. This is one of the proteins that bind and probably mediate the attachment of the 5S RNA into the large ribosomal subunit, where it forms part of the central protuberance. In Nitratidesulfovibrio vulgaris (strain DP4) (Desulfovibrio vulgaris), this protein is Large ribosomal subunit protein uL18.